A 352-amino-acid polypeptide reads, in one-letter code: tRNA pseudouridine synthase D (352 aa).

The active-site Nucleophile is Asp81. The TRUD domain maps to 157 to 303 (GVPNYFGTQR…MDHERRILRL (147 aa)).

Belongs to the pseudouridine synthase TruD family.

The catalysed reaction is uridine(13) in tRNA = pseudouridine(13) in tRNA. Responsible for synthesis of pseudouridine from uracil-13 in transfer RNAs. This chain is tRNA pseudouridine synthase D, found in Pseudomonas putida (strain ATCC 700007 / DSM 6899 / JCM 31910 / BCRC 17059 / LMG 24140 / F1).